Here is a 249-residue protein sequence, read N- to C-terminus: Putative TrmH family tRNA/rRNA methyltransferase (249 aa).

S-adenosyl-L-methionine is bound by residues G196, I216, and L225.

This sequence belongs to the class IV-like SAM-binding methyltransferase superfamily. RNA methyltransferase TrmH family.

The sequence is that of Putative TrmH family tRNA/rRNA methyltransferase from Staphylococcus haemolyticus (strain JCSC1435).